An 880-amino-acid chain; its full sequence is Alanine--tRNA ligase (880 aa).

Zn(2+) contacts are provided by His568, His572, Cys670, and His674.

Belongs to the class-II aminoacyl-tRNA synthetase family. Zn(2+) is required as a cofactor.

Its subcellular location is the cytoplasm. It catalyses the reaction tRNA(Ala) + L-alanine + ATP = L-alanyl-tRNA(Ala) + AMP + diphosphate. Functionally, catalyzes the attachment of alanine to tRNA(Ala) in a two-step reaction: alanine is first activated by ATP to form Ala-AMP and then transferred to the acceptor end of tRNA(Ala). Also edits incorrectly charged Ser-tRNA(Ala) and Gly-tRNA(Ala) via its editing domain. In Enterococcus faecalis (strain ATCC 700802 / V583), this protein is Alanine--tRNA ligase.